The following is an 880-amino-acid chain: Alanine--tRNA ligase (880 aa).

Zn(2+)-binding residues include H548, H552, C651, and H655.

The protein belongs to the class-II aminoacyl-tRNA synthetase family. Zn(2+) is required as a cofactor.

The protein resides in the cytoplasm. The enzyme catalyses tRNA(Ala) + L-alanine + ATP = L-alanyl-tRNA(Ala) + AMP + diphosphate. Functionally, catalyzes the attachment of alanine to tRNA(Ala) in a two-step reaction: alanine is first activated by ATP to form Ala-AMP and then transferred to the acceptor end of tRNA(Ala). Also edits incorrectly charged Ser-tRNA(Ala) and Gly-tRNA(Ala) via its editing domain. This is Alanine--tRNA ligase from Tropheryma whipplei (strain TW08/27) (Whipple's bacillus).